A 352-amino-acid polypeptide reads, in one-letter code: Protein Wnt-3a (352 aa).

The N-terminal stretch at 1–18 is a signal peptide; the sequence is MGCFGYLLLIIGLHQVLA. 9 disulfide bridges follow: Cys77-Cys88, Cys128-Cys136, Cys138-Cys155, Cys203-Cys217, Cys205-Cys212, Cys297-Cys312, Cys327-Cys342, Cys329-Cys339, and Cys334-Cys335. N-linked (GlcNAc...) asparagine glycosylation occurs at Asn87. Residue Ser209 is the site of O-palmitoleoyl serine attachment. A glycan (N-linked (GlcNAc...) asparagine) is linked at Asn298.

It belongs to the Wnt family. In terms of processing, disulfide bonds have critical and distinct roles in secretion and activity. Loss of each conserved cysteine results in high molecular weight oxidized Wnt oligomers, which are formed through inter-Wnt disulfide bonding. Post-translationally, palmitoleoylation is required for efficient binding to frizzled receptors. Depalmitoleoylation leads to Wnt signaling pathway inhibition. At neurula in anterior neural fold; at tailbud in dorsal midline of midbrain.

It localises to the secreted. The protein localises to the extracellular space. The protein resides in the extracellular matrix. In terms of biological role, ligand for members of the frizzled family of seven transmembrane receptors. Functions in the canonical Wnt signaling pathway that results in activation of transcription factors of the TCF/LEF family. Required for normal embryonic mesoderm development and formation of caudal somites. Required for normal morphogenesis of the developing neural tube. In Xenopus laevis (African clawed frog), this protein is Protein Wnt-3a (wnt3a).